The following is a 479-amino-acid chain: V-type ATP synthase beta chain (479 aa).

The tract at residues 458–479 (EGDSEREAPKMDSPHEEISEKS) is disordered.

Belongs to the ATPase alpha/beta chains family.

In terms of biological role, produces ATP from ADP in the presence of a proton gradient across the membrane. The V-type beta chain is a regulatory subunit. This chain is V-type ATP synthase beta chain, found in Nitrosococcus oceani (strain ATCC 19707 / BCRC 17464 / JCM 30415 / NCIMB 11848 / C-107).